The primary structure comprises 512 residues: Cytochrome P450 monooxygenase adrA (512 aa).

A helical membrane pass occupies residues 12–32 (FEPVSLVGLVLLSGLFLLLTA). 3 N-linked (GlcNAc...) asparagine glycosylation sites follow: asparagine 86, asparagine 149, and asparagine 210. Cysteine 453 lines the heme pocket.

This sequence belongs to the cytochrome P450 family. The cofactor is heme.

It localises to the membrane. It functions in the pathway secondary metabolite biosynthesis; terpenoid biosynthesis. In terms of biological role, cytochrome P450 monooxygenase; part of the gene cluster that mediates the biosynthesis of andrastins, meroterpenoid compounds that exhibit inhibitory activity against ras farnesyltransferase, suggesting that they could be promising leads for antitumor agents. The first step of the pathway is the synthesis of 3,5-dimethylorsellinic acid (DMOA) by the polyketide synthase adrD via condensation of one acetyl-CoA starter unit with 3 malonyl-CoA units and 2 methylations. DMAO is then converted to farnesyl-DMAO by the prenyltransferase adrG. The methyltransferase adrK catalyzes the methylation of the carboxyl group of farnesyl-DMAO to farnesyl-DMAO methyl ester which is further converted to epoxyfarnesyl-DMAO methyl ester by the FAD-dependent monooxygenase adrH. The terpene cyclase adrI then catalyzes the carbon skeletal rearrangement to generate the andrastin E, the first compound in the pathway having the andrastin scaffold, with the tetracyclic ring system. The post-cyclization tailoring enzymes adrF, adrE, adrJ, and adrA, are involved in the conversion of andrastin E into andrastin A. The short chain dehydrogenase adrF is responsible for the oxidation of the C-3 a hydroxyl group of andrastin E to yield the corresponding ketone, andrastin D. The ketoreductase adrE stereoselectively reduces the carbonyl moiety to reverse the stereochemistry of the C-3 position to yield andrastin F. The acetyltransferase adrJ is the acetyltransferase that attaches the acetyl group to the C-3 hydroxyl group of andrastin F to yield andrastin C. Finally, the cytochrome P450 monooxygenase adrA catalyzes two sequential oxidation reactions of the C-23 methyl group, to generate the corresponding alcohol andrastin B, and aldehyde andrastin A. The protein is Cytochrome P450 monooxygenase adrA of Penicillium rubens (strain ATCC 28089 / DSM 1075 / NRRL 1951 / Wisconsin 54-1255) (Penicillium chrysogenum).